Reading from the N-terminus, the 247-residue chain is Agamous-like MADS-box protein FUL-L (247 aa).

The MADS-box domain maps to 1-61 (MGRGRVQLKR…GKLFEYSSDS (61 aa)). Positions 88–178 (QGNWSMDYPK…AKKVKEKEKV (91 aa)) constitute a K-box domain. The disordered stretch occupies residues 224-247 (EDGAEARPSPNTLMPPWMLRHVNE).

In terms of tissue distribution, expressed in tendrils and flowers.

It localises to the nucleus. In terms of biological role, probable transcription factor involved in flower development. The chain is Agamous-like MADS-box protein FUL-L from Vitis vinifera (Grape).